The sequence spans 60 residues: Large ribosomal subunit protein bL33 (60 aa).

This sequence belongs to the bacterial ribosomal protein bL33 family.

This Chlorobium luteolum (strain DSM 273 / BCRC 81028 / 2530) (Pelodictyon luteolum) protein is Large ribosomal subunit protein bL33.